Consider the following 1244-residue polypeptide: Ras-specific guanine nucleotide-releasing factor 2 (1244 aa).

Residues 22 to 129 enclose the PH 1 domain; that stretch reads EGTKRGYLSK…WVEAIQQASY (108 aa). A coiled-coil region spans residues 147–189; that stretch reads VQIVETEKVAANQLRTQLEDQDTEIERLKAEIIALNKTKERMR. The region spanning 201–230 is the IQ domain; that stretch reads DIKKIKKVQSFMRGWLCRRKWKIIVQDYIC. The 187-residue stretch at 239–425 folds into the DH domain; the sequence is KRNQIVFNMV…EELSRVMHDE (187 aa). The 119-residue stretch at 466 to 584 folds into the PH 2 domain; the sequence is PSVERGKLSK…WTSDISQCID (119 aa). The N-terminal Ras-GEF domain occupies 631–745; that stretch reads KVPQIRYASV…PVRTRKLSLN (115 aa). 3 disordered regions span residues 704–743, 759–814, and 843–879; these read NRSG…RKLS, TTSS…NAEV, and PESP…AENS. Positions 706 to 715 are enriched in basic and acidic residues; the sequence is SGDHVNDKSP. Residues 728–743 are compositionally biased toward polar residues; sequence SISSRTSSPVRTRKLS. 2 stretches are compositionally biased toward low complexity: residues 759–774 and 781–806; these read TTSS…ANPT and NNNN…QSPG. A Ras-GEF domain is found at 1009–1241; sequence SAMEIAEQIT…YDLSLKIEPR (233 aa).

It localises to the cytoplasm. It is found in the cell membrane. Its subcellular location is the endoplasmic reticulum membrane. Functions as a calcium-regulated nucleotide exchange factor activating both Ras and rac1 through the exchange of bound GDP for GTP. May function in synaptic plasticity. This chain is Ras-specific guanine nucleotide-releasing factor 2 (rasgrf2), found in Danio rerio (Zebrafish).